Here is a 645-residue protein sequence, read N- to C-terminus: Threonine--tRNA ligase (645 aa).

The TGS domain occupies 1 to 61; it reads MPVITLPDGS…SDDAKLSIIT (61 aa). Positions 243-534 are catalytic; the sequence is DHRKLGKKLD…LIEDTEGAFP (292 aa). The Zn(2+) site is built by Cys334, His385, and His511.

The protein belongs to the class-II aminoacyl-tRNA synthetase family. In terms of assembly, homodimer. Requires Zn(2+) as cofactor.

It is found in the cytoplasm. It catalyses the reaction tRNA(Thr) + L-threonine + ATP = L-threonyl-tRNA(Thr) + AMP + diphosphate + H(+). Its function is as follows. Catalyzes the attachment of threonine to tRNA(Thr) in a two-step reaction: L-threonine is first activated by ATP to form Thr-AMP and then transferred to the acceptor end of tRNA(Thr). Also edits incorrectly charged L-seryl-tRNA(Thr). The polypeptide is Threonine--tRNA ligase (Marinomonas sp. (strain MWYL1)).